A 313-amino-acid polypeptide reads, in one-letter code: Isoaspartyl peptidase (313 aa).

The Nucleophile role is filled by Thr179. Residues 207–210 (RVGD) and 230–233 (TGTG) contribute to the substrate site.

It belongs to the Ntn-hydrolase family. As to quaternary structure, heterotetramer of two alpha and two beta chains arranged as a dimer of alpha/beta heterodimers. In terms of processing, autocleaved. Generates the alpha and beta subunits. The beta subunit is thought to be responsible for the nucleophile hydrolase activity.

The enzyme catalyses Cleavage of a beta-linked Asp residue from the N-terminus of a polypeptide.. Functionally, degrades proteins damaged by L-isoaspartyl residue formation (also known as beta-Asp residues). Degrades L-isoaspartyl-containing di- and tripeptides. Acts best on iso-Asp-Leu, followed by iso-Asp-Ala, -His and to a lesser extent iso-Asp-Lys, -Phe and iso-Asp-Leu-Ala. Does not act on internal iso-Asp bonds (Als-iso-Asp-Leu-Ala). Does not act on alpha-Asp bonds. Has poor L-asparaginase activity. This is Isoaspartyl peptidase (iaaA) from Salmonella typhimurium (strain LT2 / SGSC1412 / ATCC 700720).